A 187-amino-acid chain; its full sequence is Elongation factor P (187 aa).

Belongs to the elongation factor P family.

It is found in the cytoplasm. Its pathway is protein biosynthesis; polypeptide chain elongation. In terms of biological role, involved in peptide bond synthesis. Stimulates efficient translation and peptide-bond synthesis on native or reconstituted 70S ribosomes in vitro. Probably functions indirectly by altering the affinity of the ribosome for aminoacyl-tRNA, thus increasing their reactivity as acceptors for peptidyl transferase. The sequence is that of Elongation factor P from Treponema denticola (strain ATCC 35405 / DSM 14222 / CIP 103919 / JCM 8153 / KCTC 15104).